The primary structure comprises 307 residues: Acyl transferase (307 aa).

Active-site charge relay system residues include S116, D213, and H243.

It belongs to the LuxD family.

The protein operates within lipid metabolism; fatty acid reduction for biolumincescence. Acyl transferase is part of the fatty acid reductase system required for aldehyde biosynthesis; it produces fatty acids for the luminescent reaction. This chain is Acyl transferase, found in Aliivibrio fischeri (strain MJ11) (Vibrio fischeri).